Reading from the N-terminus, the 848-residue chain is F-BAR domain only protein 2 (848 aa).

An F-BAR domain is found at 4-250; it reads PYFLENFWGN…NMENTSVESL (247 aa). A coiled-coil region spans residues 87–114; it reads HMELVRKLQELIKEVQKYVDEQAKNHKK. Disordered regions lie at residues 292-316 and 404-526; these read IPGR…NASN and LSPT…RAES. 2 positions are modified to phosphoserine: Ser-405 and Ser-417. Positions 445–460 are enriched in low complexity; that stretch reads PFGPTSTGSSSSLPQS. An MHD domain is found at 580–848; it reads ALPIAVAFTE…FATGRYMADC (269 aa).

It belongs to the FCHO family. In terms of assembly, homodimer.

It localises to the membrane. The protein localises to the clathrin-coated pit. May function in an early step of clathrin-mediated endocytosis. This Danio rerio (Zebrafish) protein is F-BAR domain only protein 2 (fcho2).